A 58-amino-acid polypeptide reads, in one-letter code: MARKRRKGGEGLVTAIGLVRFYEEVEEKIKVPPEAVIGAAFALSIMTIALDLLLKAAR.

Topologically, residues 1 to 32 (MARKRRKGGEGLVTAIGLVRFYEEVEEKIKVP) are cytoplasmic. The helical transmembrane segment at 33–54 (PEAVIGAAFALSIMTIALDLLL) threads the bilayer. Topologically, residues 55–58 (KAAR) are extracellular.

Belongs to the SEC61-beta family. Component of the protein translocase complex. Heterotrimer consisting of alpha (SecY), beta (SecG) and gamma (SecE) subunits. Can form oligomers of the heterotrimer.

The protein resides in the cell membrane. Its function is as follows. Involved in protein export. The function of the beta subunit is unknown, but it may be involved in stabilization of the trimeric complex. In Ignicoccus hospitalis (strain KIN4/I / DSM 18386 / JCM 14125), this protein is Preprotein translocase subunit SecG.